Here is a 93-residue protein sequence, read N- to C-terminus: Cell division protein CrgA (93 aa).

Helical transmembrane passes span 31–51 (VWFV…LMVF) and 70–90 (LGPW…LLTM).

This sequence belongs to the CrgA family.

It localises to the cell membrane. Its function is as follows. Involved in cell division. The sequence is that of Cell division protein CrgA from Mycobacterium bovis (strain ATCC BAA-935 / AF2122/97).